Here is a 230-residue protein sequence, read N- to C-terminus: Thymidylate synthase 1 (230 aa).

Arg-92–Arg-93 lines the dUMP pocket. The Nucleophile role is filled by Cys-112. DUMP is bound by residues Arg-132–Asp-135, Asn-143, and His-173–Tyr-175. Asp-135 serves as a coordination point for (6R)-5,10-methylene-5,6,7,8-tetrahydrofolate.

This sequence belongs to the thymidylate synthase family. Bacterial-type ThyA subfamily. As to quaternary structure, homodimer.

Its subcellular location is the cytoplasm. It catalyses the reaction dUMP + (6R)-5,10-methylene-5,6,7,8-tetrahydrofolate = 7,8-dihydrofolate + dTMP. It functions in the pathway pyrimidine metabolism; dTTP biosynthesis. In terms of biological role, catalyzes the reductive methylation of 2'-deoxyuridine-5'-monophosphate (dUMP) to 2'-deoxythymidine-5'-monophosphate (dTMP) while utilizing 5,10-methylenetetrahydrofolate (mTHF) as the methyl donor and reductant in the reaction, yielding dihydrofolate (DHF) as a by-product. This enzymatic reaction provides an intracellular de novo source of dTMP, an essential precursor for DNA biosynthesis. In Bacillus amyloliquefaciens (Bacillus velezensis), this protein is Thymidylate synthase 1.